The primary structure comprises 346 residues: Serine/threonine-protein phosphatase PP1(5.9) (346 aa).

4 residues coordinate Mn(2+): D102, H104, D130, and N162. H163 serves as the catalytic Proton donor. Positions 211 and 287 each coordinate Mn(2+).

It belongs to the PPP phosphatase family. PP-1 subfamily. Mn(2+) is required as a cofactor.

It carries out the reaction O-phospho-L-seryl-[protein] + H2O = L-seryl-[protein] + phosphate. The catalysed reaction is O-phospho-L-threonyl-[protein] + H2O = L-threonyl-[protein] + phosphate. In Trypanosoma brucei brucei, this protein is Serine/threonine-protein phosphatase PP1(5.9).